The chain runs to 248 residues: Methionine aminopeptidase 1 (248 aa).

His-77 contributes to the substrate binding site. A divalent metal cation contacts are provided by Asp-94, Asp-105, and His-168. His-175 is a substrate binding site. Residues Glu-201 and Glu-232 each coordinate a divalent metal cation.

Monomer. The cofactor is Co(2+). It depends on Zn(2+) as a cofactor. Requires Mn(2+) as cofactor. Fe(2+) serves as cofactor.

The protein localises to the cytoplasm. The enzyme catalyses Release of N-terminal amino acids, preferentially methionine, from peptides and arylamides.. Its function is as follows. Removes the N-terminal methionine from nascent proteins. The N-terminal methionine is often cleaved when the second residue in the primary sequence is small and uncharged (Met-Ala-, Cys, Gly, Pro, Ser, Thr, or Val). Requires deformylation of the N(alpha)-formylated initiator methionine before it can be hydrolyzed. The chain is Methionine aminopeptidase 1 from Bacillus subtilis (strain 168).